A 557-amino-acid chain; its full sequence is Formate--tetrahydrofolate ligase 2 (557 aa).

Thr-66–Thr-73 contributes to the ATP binding site.

Belongs to the formate--tetrahydrofolate ligase family.

It carries out the reaction (6S)-5,6,7,8-tetrahydrofolate + formate + ATP = (6R)-10-formyltetrahydrofolate + ADP + phosphate. It participates in one-carbon metabolism; tetrahydrofolate interconversion. The chain is Formate--tetrahydrofolate ligase 2 from Streptococcus pyogenes serotype M28 (strain MGAS6180).